The sequence spans 396 residues: Cathepsin D (396 aa).

The N-terminal stretch at 1 to 18 (MKMLLLCVFSALALTNDA) is a signal peptide. Positions 19 to 61 (LVRIPLKKFRSIRRQLTDSGKRAEELLADHHSLKYNLSFPASN) are cleaved as a propeptide — activation peptide. Positions 76–393 (YYGEIGLGTP…DRDANRVGFA (318 aa)) constitute a Peptidase A1 domain. Asp-94 is an active-site residue. An intrachain disulfide couples Cys-107 to Cys-114. N-linked (GlcNAc...) asparagine glycosylation is found at Asn-131 and Asn-249. Residues Cys-272 and Cys-276 are joined by a disulfide bond. Residue Asp-281 is part of the active site. The cysteines at positions 315 and 352 are disulfide-linked.

This sequence belongs to the peptidase A1 family. As to quaternary structure, monomer.

The protein localises to the lysosome. It carries out the reaction Specificity similar to, but narrower than, that of pepsin A. Does not cleave the 4-Gln-|-His-5 bond in B chain of insulin.. Inhibited by pepstatin. Acid protease active in intracellular protein breakdown. The chain is Cathepsin D (ctsd) from Chionodraco hamatus (Antarctic teleost icefish).